A 474-amino-acid polypeptide reads, in one-letter code: Sialyltransferase-like protein 1 (474 aa).

Topologically, residues Met-1–Gln-14 are cytoplasmic. The chain crosses the membrane as a helical; Signal-anchor for type II membrane protein span at residues Leu-15–Ala-35. The Lumenal segment spans residues Asp-36–Thr-474. N-linked (GlcNAc...) asparagine glycosylation is found at Asn-88, Asn-120, Asn-155, and Asn-243. Residues Arg-376–Lys-421 are disordered.

The protein belongs to the glycosyltransferase 29 family. As to expression, highly expressed in inflorescences and siliques and at lower levels in roots, leaves and stems.

The protein resides in the golgi apparatus membrane. Required for normal pollen grain germination and pollen tube growth. May not be required for pollen development and female gametophytic function. This Arabidopsis thaliana (Mouse-ear cress) protein is Sialyltransferase-like protein 1.